The chain runs to 99 residues: Large ribosomal subunit protein bL27 (99 aa).

Residues 1-9 constitute a propeptide that is removed on maturation; that stretch reads MLIMNLQLF.

It belongs to the bacterial ribosomal protein bL27 family. Post-translationally, the N-terminus is cleaved by ribosomal processing cysteine protease Prp.

This is Large ribosomal subunit protein bL27 from Clostridium botulinum (strain Alaska E43 / Type E3).